We begin with the raw amino-acid sequence, 246 residues long: Probable transcriptional regulatory protein HSM_1763 (246 aa).

Belongs to the TACO1 family.

It is found in the cytoplasm. This Histophilus somni (strain 2336) (Haemophilus somnus) protein is Probable transcriptional regulatory protein HSM_1763.